We begin with the raw amino-acid sequence, 236 residues long: Rho-related GTP-binding protein RhoV (236 aa).

The disordered stretch occupies residues 1–27; that stretch reads MPPRELSEAEPPPLRAPTPPPRRRSAP. Positions 10–20 are enriched in pro residues; the sequence is EPPPLRAPTPP. At Ser-25 the chain carries Phosphoserine. GTP contacts are provided by residues 38–45, 85–89, and 143–146; these read GDGAVGKS, DTAGQ, and TQAD. The S-palmitoyl cysteine moiety is linked to residue Cys-234.

This sequence belongs to the small GTPase superfamily. Rho family. As to quaternary structure, interacts with PAK2. The cofactor is Mg(2+). In terms of tissue distribution, highly expressed in pancreas, placenta, and fetal brain.

It localises to the cell membrane. The protein resides in the endosome membrane. Its function is as follows. Plays a role in the control of the actin cytoskeleton via activation of the JNK pathway. This chain is Rho-related GTP-binding protein RhoV, found in Homo sapiens (Human).